Consider the following 158-residue polypeptide: Transcription elongation factor GreB (158 aa).

The protein belongs to the GreA/GreB family. GreB subfamily.

Its function is as follows. Necessary for efficient RNA polymerase transcription elongation past template-encoded arresting sites. The arresting sites in DNA have the property of trapping a certain fraction of elongating RNA polymerases that pass through, resulting in locked ternary complexes. Cleavage of the nascent transcript by cleavage factors such as GreA or GreB allows the resumption of elongation from the new 3'terminus. GreB releases sequences of up to 9 nucleotides in length. The polypeptide is Transcription elongation factor GreB (Escherichia coli (strain K12)).